The chain runs to 388 residues: Acetate kinase (388 aa).

Asn-7 lines the Mg(2+) pocket. Lys-14 contributes to the ATP binding site. Substrate is bound at residue Arg-76. The active-site Proton donor/acceptor is the Asp-133. ATP is bound by residues 193 to 197 (HLGNG), 267 to 269 (DMR), and 315 to 319 (GIGEN). Glu-374 is a Mg(2+) binding site.

This sequence belongs to the acetokinase family. In terms of assembly, homodimer. Requires Mg(2+) as cofactor. Mn(2+) serves as cofactor.

The protein resides in the cytoplasm. The catalysed reaction is acetate + ATP = acetyl phosphate + ADP. The protein operates within metabolic intermediate biosynthesis; acetyl-CoA biosynthesis; acetyl-CoA from acetate: step 1/2. In terms of biological role, catalyzes the formation of acetyl phosphate from acetate and ATP. Can also catalyze the reverse reaction. This is Acetate kinase from Micrococcus luteus (strain ATCC 4698 / DSM 20030 / JCM 1464 / CCM 169 / CCUG 5858 / IAM 1056 / NBRC 3333 / NCIMB 9278 / NCTC 2665 / VKM Ac-2230) (Micrococcus lysodeikticus).